Reading from the N-terminus, the 260-residue chain is Tryptophan synthase alpha chain (260 aa).

Active-site proton acceptor residues include E52 and D63.

It belongs to the TrpA family. As to quaternary structure, tetramer of two alpha and two beta chains.

The enzyme catalyses (1S,2R)-1-C-(indol-3-yl)glycerol 3-phosphate + L-serine = D-glyceraldehyde 3-phosphate + L-tryptophan + H2O. It functions in the pathway amino-acid biosynthesis; L-tryptophan biosynthesis; L-tryptophan from chorismate: step 5/5. In terms of biological role, the alpha subunit is responsible for the aldol cleavage of indoleglycerol phosphate to indole and glyceraldehyde 3-phosphate. The protein is Tryptophan synthase alpha chain of Streptococcus thermophilus (strain ATCC BAA-491 / LMD-9).